Here is a 429-residue protein sequence, read N- to C-terminus: Probable M18 family aminopeptidase 2 (429 aa).

H82, H156, and H401 together coordinate Zn(2+).

It belongs to the peptidase M18 family. Requires Zn(2+) as cofactor.

The sequence is that of Probable M18 family aminopeptidase 2 from Pseudomonas fluorescens (strain SBW25).